The chain runs to 171 residues: Small ribosomal subunit protein uS5 (171 aa).

One can recognise an S5 DRBM domain in the interval 16 to 79 (LREKMISVNR…EEARRKLVKI (64 aa)).

Belongs to the universal ribosomal protein uS5 family. In terms of assembly, part of the 30S ribosomal subunit. Contacts proteins S4 and S8.

In terms of biological role, with S4 and S12 plays an important role in translational accuracy. Located at the back of the 30S subunit body where it stabilizes the conformation of the head with respect to the body. This is Small ribosomal subunit protein uS5 from Thiobacillus denitrificans (strain ATCC 25259 / T1).